We begin with the raw amino-acid sequence, 313 residues long: Porphobilinogen deaminase (313 aa).

An S-(dipyrrolylmethanemethyl)cysteine modification is found at cysteine 242.

It belongs to the HMBS family. Monomer. The cofactor is dipyrromethane.

The enzyme catalyses 4 porphobilinogen + H2O = hydroxymethylbilane + 4 NH4(+). Its pathway is porphyrin-containing compound metabolism; protoporphyrin-IX biosynthesis; coproporphyrinogen-III from 5-aminolevulinate: step 2/4. Tetrapolymerization of the monopyrrole PBG into the hydroxymethylbilane pre-uroporphyrinogen in several discrete steps. This Pectobacterium carotovorum subsp. carotovorum (strain PC1) protein is Porphobilinogen deaminase.